We begin with the raw amino-acid sequence, 261 residues long: Bidirectional sugar transporter SWEET1b (261 aa).

Residues 1 to 6 (MEDLAK) are Extracellular-facing. Residues 7–27 (FLFGVSGNVIALFLFLSPVPT) form a helical membrane-spanning segment. Residues 7–95 (FLFGVSGNVI…VVFLVFASTH (89 aa)) form the MtN3/slv 1 domain. At 28–42 (FWRIIRRKSTEDFSG) the chain is on the cytoplasmic side. Residues 43–63 (VPYNMTLINCLLSAWYGLPFV) form a helical membrane-spanning segment. At 64–71 (SPNNILVS) the chain is on the extracellular side. Residues 72 to 92 (TINGAGAVIETAYVVVFLVFA) form a helical membrane-spanning segment. The Cytoplasmic segment spans residues 93–101 (STHKTRLRT). A helical membrane pass occupies residues 102–122 (LGLAAAVASVFAAVALVSLLA). Residues 123–129 (LHGQHRK) are Extracellular-facing. Residues 130-150 (LLCGVAATVCSICMYASPLSI) traverse the membrane as a helical segment. The region spanning 133-215 (GVAATVCSIC…VLYAIYRNNK (83 aa)) is the MtN3/slv 2 domain. The Cytoplasmic segment spans residues 151-164 (MRLVIKTKSVEYMP). The chain crosses the membrane as a helical span at residues 165-185 (FLLSLAVFLCGTSWFIYGLLG). At 186 to 189 (RDPF) the chain is on the extracellular side. The helical transmembrane segment at 190-210 (VTIPNGCGSFLGAVQLVLYAI) threads the bilayer. At 211–261 (YRNNKGAGGGSGGKQAGDDDVEMAEGRNNKVADGGAAEDDSTAGGKAGTEV) the chain is on the cytoplasmic side. A disordered region spans residues 218 to 261 (GGGSGGKQAGDDDVEMAEGRNNKVADGGAAEDDSTAGGKAGTEV).

This sequence belongs to the SWEET sugar transporter family. As to quaternary structure, forms homodimers.

The protein localises to the cell membrane. The enzyme catalyses D-glucose(out) = D-glucose(in). It carries out the reaction D-galactose(in) = D-galactose(out). Its function is as follows. Mediates transport of sugars across the plasma membrane. Can transport glucose and galactose, but not fructose, mannose and sucrose. The polypeptide is Bidirectional sugar transporter SWEET1b (SWEET1B) (Oryza sativa subsp. indica (Rice)).